The chain runs to 351 residues: MSPEYFLRSLLLIILATFSANASNWLYLAKLSSVGSISEEETCEKLKGLIQRQVQMCKRNLEVMDSVRRGAQLAIEECQYQFRNRRWNCSTLDTLPVFGKVVTQGTREAAFVYAISSAGVAFAVTRACSSGELDKCGCDRTVQGGSPQGFQWSGCSDNIAYGVAFSQSFVDVRERSKGASSNRALMNLHNNEAGRKAILNNMRVECKCHGVSGSCEFKTCWKAMPPFRKVGNVLKEKFDGATEVEQSEIGSTKVLVPKNSQFKPHTDEDLVYLDSSPDFCDHDLKNGVLGTSGRQCNKTSKAIDGCELMCCGRGFHTDEVEVVERCSCKFHWCCSVKCKPCHRVVEIHTCR.

The N-terminal stretch at 1 to 22 (MSPEYFLRSLLLIILATFSANA) is a signal peptide. 2 N-linked (GlcNAc...) asparagine glycosylation sites follow: N21 and N88. Cystine bridges form between C78–C89, C128–C136, C138–C155, C206–C220, C208–C215, C280–C311, C296–C306, C310–C350, C326–C341, C328–C338, and C333–C334. A lipid anchor (O-palmitoleoyl serine; by PORCN) is attached at S212. N-linked (GlcNAc...) asparagine glycosylation occurs at N297.

The protein belongs to the Wnt family. As to quaternary structure, interacts with CPZ. Post-translationally, palmitoleoylation is required for efficient binding to frizzled receptors. Depalmitoleoylation leads to Wnt signaling pathway inhibition. As to expression, predominantly expressed in the diencephalon neuromere D2.

The protein resides in the secreted. It localises to the extracellular space. The protein localises to the extracellular matrix. Ligand for members of the frizzled family of seven transmembrane receptors. Plays an important role in embryonic development. This Gallus gallus (Chicken) protein is Protein Wnt-4 (WNT4).